A 298-amino-acid chain; its full sequence is Tyrosine recombinase XerC (298 aa).

The 84-residue stretch at 1–84 folds into the Core-binding (CB) domain; sequence MNHIQEAFLN…TLRTFYEYWM (84 aa). The Tyr recombinase domain maps to 105–286; it reads YLPQFFYEEE…SNQQLRKVYL (182 aa). Active-site residues include arginine 145, lysine 169, histidine 238, arginine 241, and histidine 264. Residue tyrosine 273 is the O-(3'-phospho-DNA)-tyrosine intermediate of the active site.

It belongs to the 'phage' integrase family. XerC subfamily. As to quaternary structure, forms a cyclic heterotetrameric complex composed of two molecules of XerC and two molecules of XerD.

It is found in the cytoplasm. Site-specific tyrosine recombinase, which acts by catalyzing the cutting and rejoining of the recombining DNA molecules. The XerC-XerD complex is essential to convert dimers of the bacterial chromosome into monomers to permit their segregation at cell division. It also contributes to the segregational stability of plasmids. This chain is Tyrosine recombinase XerC, found in Staphylococcus aureus (strain Mu3 / ATCC 700698).